The primary structure comprises 307 residues: Porphobilinogen deaminase (307 aa).

Position 241 is an S-(dipyrrolylmethanemethyl)cysteine (Cys-241).

This sequence belongs to the HMBS family. Monomer. The cofactor is dipyrromethane.

The catalysed reaction is 4 porphobilinogen + H2O = hydroxymethylbilane + 4 NH4(+). It participates in porphyrin-containing compound metabolism; protoporphyrin-IX biosynthesis; coproporphyrinogen-III from 5-aminolevulinate: step 2/4. In terms of biological role, tetrapolymerization of the monopyrrole PBG into the hydroxymethylbilane pre-uroporphyrinogen in several discrete steps. This chain is Porphobilinogen deaminase, found in Coxiella burnetii (strain RSA 331 / Henzerling II).